A 395-amino-acid polypeptide reads, in one-letter code: Oxalate oxidoreductase subunit alpha (395 aa).

As to quaternary structure, dimer of heterotrimer of one alpha, one beta and one delta subunit.

The enzyme catalyses oxidized 2[4Fe-4S]-[ferredoxin] + oxalate = reduced 2[4Fe-4S]-[ferredoxin] + 2 CO2. Catalyzes the anaerobic oxidation of oxalate using a broad range of electron acceptors, including ferredoxin and the nickel-dependent carbon monoxide dehydrogenase. Does not require coenzyme A as cosubstrate. Enables anaerobic growth on oxalate which is used as energy source by the bacteria. This chain is Oxalate oxidoreductase subunit alpha, found in Moorella thermoacetica (strain ATCC 39073 / JCM 9320).